The sequence spans 1390 residues: General transcriptional corepressor trfA (1390 aa).

The disordered stretch occupies residues 53 to 143; sequence QQQQQHQQHQ…QQQQQQQQQQ (91 aa). TPR repeat units lie at residues 171 to 204, 206 to 238, 239 to 272, 275 to 308, 312 to 345, 349 to 382, 384 to 419, 420 to 453, 454 to 487, and 489 to 521; these read ESIW…NPFS, KALT…ESKN, GEVW…LPNP, PNLW…DNKF, TEIY…PPLP, SDIW…NATH, KVLQ…DSSD, AQTW…DGRN, PTFW…NPFL, and EVWY…DPHN. Disordered stretches follow at residues 539–596, 632–938, and 958–1390; these read PIGK…NSFV, ERGR…YNNI, and LDEE…KLER. The span at 540–557 shows a compositional bias: basic and acidic residues; sequence IGKDGYDLQNGEHGEHGG. Residues 582 to 593 show a composition bias toward low complexity; it reads QNNRNGNNNGNN. Residues 632–641 show a composition bias toward basic and acidic residues; that stretch reads ERGRGEDMHN. Over residues 644–744 the composition is skewed to low complexity; sequence HSQYSNSMSM…MNDNVNSKNN (101 aa). Basic and acidic residues predominate over residues 745-803; sequence DVLDRRYKGILEREKTSPNGDGRDNRDNIRDNRDNRDSRDGRDNRDGRDSRDRIQEYTR. Residues 805-846 show a composition bias toward low complexity; it reads YNNNNNNNNSISSINNNNNNNNNNYNNNNNNNNNNNNNNNNN. Residues 857-871 are compositionally biased toward basic and acidic residues; that stretch reads HNDRRSYERDNKERI. Composition is skewed to low complexity over residues 872-898 and 917-937; these read NNNN…NNNN and NNSN…NYNN. Basic and acidic residues-rich tracts occupy residues 977-993, 1000-1029, 1037-1099, and 1120-1135; these read KEAE…KERS, EKPD…EKES, KEIE…EKES, and TKKD…EKKL. Positions 1136 to 1146 are enriched in polar residues; that stretch reads SSVSPTTTAVE. A compositionally biased stretch (basic and acidic residues) spans 1147–1169; that stretch reads QSRDETKELEMDTKEDSEKEKKS. Low complexity-rich tracts occupy residues 1170 to 1180 and 1192 to 1203; these read STTTTAAASES and TTTTTTTTNTTT. Positions 1206–1218 are enriched in basic and acidic residues; that stretch reads PTHKDKESSKNDD. The segment covering 1219–1228 has biased composition (low complexity); it reads TTTTTTTTTT. Residues 1229 to 1239 show a composition bias toward polar residues; that stretch reads KSAKSPNSSPT. The span at 1240–1263 shows a compositional bias: basic and acidic residues; it reads RSDEVVEPHQDASQEEINKRKLED. 2 stretches are compositionally biased toward low complexity: residues 1277 to 1289 and 1315 to 1337; these read STPS…STPS and SSSS…TNSS. A compositionally biased stretch (basic and acidic residues) spans 1339–1374; it reads KNERDRDRERERERERDREREREREREREREREKNK.

Belongs to the CYC8/SSN6 family. In terms of assembly, associates with tupA to form the trfA-tupA corepressor complex.

It is found in the nucleus. In terms of biological role, acts as a component of the trfA-tupA corepressor complex which is involved in the repression of many genes in a wide variety of physiological processes. May also be involved in the derepression of at least some target genes. The complex is recruited to target genes by interaction with DNA-bound transcriptional repressors. The complex recruits histone deacetylases to produce a repressive chromatin structure, interacts with hypoacetylated N-terminal tails of histones H3 and H4 that have been programmed for repression by the action of histone deacetylases and interferes directly with the transcriptional machinery by associating with the RNA polymerase II mediator complex. Required for normal growth and for aggregation in early development. Required for a proper chemotactic response to cAMP. The chain is General transcriptional corepressor trfA (trfA) from Dictyostelium discoideum (Social amoeba).